Consider the following 366-residue polypeptide: Quinolinate synthase (366 aa).

Residues H44 and S61 each contribute to the iminosuccinate site. Position 108 (C108) interacts with [4Fe-4S] cluster. Iminosuccinate is bound by residues 139–141 (YVN) and S160. C228 contributes to the [4Fe-4S] cluster binding site. Iminosuccinate-binding positions include 254–256 (HPE) and T271. C318 contributes to the [4Fe-4S] cluster binding site.

Belongs to the quinolinate synthase family. Type 3 subfamily. [4Fe-4S] cluster is required as a cofactor.

Its subcellular location is the cytoplasm. The catalysed reaction is iminosuccinate + dihydroxyacetone phosphate = quinolinate + phosphate + 2 H2O + H(+). It participates in cofactor biosynthesis; NAD(+) biosynthesis; quinolinate from iminoaspartate: step 1/1. Catalyzes the condensation of iminoaspartate with dihydroxyacetone phosphate to form quinolinate. The protein is Quinolinate synthase of Staphylococcus carnosus (strain TM300).